A 184-amino-acid polypeptide reads, in one-letter code: Elongation factor P (184 aa).

The protein belongs to the elongation factor P family.

The protein resides in the cytoplasm. It participates in protein biosynthesis; polypeptide chain elongation. Involved in peptide bond synthesis. Stimulates efficient translation and peptide-bond synthesis on native or reconstituted 70S ribosomes in vitro. Probably functions indirectly by altering the affinity of the ribosome for aminoacyl-tRNA, thus increasing their reactivity as acceptors for peptidyl transferase. In Leptothrix cholodnii (strain ATCC 51168 / LMG 8142 / SP-6) (Leptothrix discophora (strain SP-6)), this protein is Elongation factor P.